Reading from the N-terminus, the 296-residue chain is Calponin-2 (296 aa).

Ser-2 is subject to N-acetylserine. An N6-acetyllysine mark is found at Lys-8 and Lys-25. The Calponin-homology (CH) domain maps to Pro-28 to Lys-132. At Ser-138 the chain carries Phosphoserine. Calponin-like repeat units follow at residues Ile-166–Tyr-191, Ile-206–Tyr-231, and Met-245–Tyr-269. Residues Pro-275 to Ser-296 form a disordered region.

The protein belongs to the calponin family. In terms of tissue distribution, smooth muscle, and tissues containing significant amounts of smooth muscle.

In terms of biological role, thin filament-associated protein that is implicated in the regulation and modulation of smooth muscle contraction. It is capable of binding to actin, calmodulin and tropomyosin. The interaction of calponin with actin inhibits the actomyosin Mg-ATPase activity. This Sus scrofa (Pig) protein is Calponin-2 (CNN2).